A 526-amino-acid chain; its full sequence is Methyltetrahydroprotoberberine 14-monooxygenase (526 aa).

A helical membrane pass occupies residues 14–34 (LLLQYLQPISVALVVIALVWN). Cys-468 provides a ligand contact to heme.

This sequence belongs to the cytochrome P450 family. Heme is required as a cofactor. As to expression, mainly expressed in roots, and barely in stems, leaves and carpels.

The protein resides in the membrane. The catalysed reaction is (S)-cis-N-methylcanadine + reduced [NADPH--hemoprotein reductase] + O2 = allocryptopine + oxidized [NADPH--hemoprotein reductase] + H2O + 2 H(+). It carries out the reaction (S)-cis-N-methylstylopine + reduced [NADPH--hemoprotein reductase] + O2 = protopine + oxidized [NADPH--hemoprotein reductase] + H2O + 2 H(+). The enzyme catalyses (S)-cis-N-methyltetrahydrothalifendine + reduced [NADPH--hemoprotein reductase] + O2 = 7-hydroxy-8-methoxy-11-methyl-17,19-dioxa-11-azatetracyclo[12.7.0.0(4,9).0(16,20)]henicosa-1(21),4(9),5,7,14,16(20)-hexaen-2-one + oxidized [NADPH--hemoprotein reductase] + H2O + 2 H(+). It catalyses the reaction (S)-cis-N-methyltetrahydropalmatine + reduced [NADPH--hemoprotein reductase] + O2 = muramine + oxidized [NADPH--hemoprotein reductase] + H2O + 2 H(+). It functions in the pathway alkaloid biosynthesis. Its activity is regulated as follows. Repressed by cytochrome P450 inhibitors ketoconazole, metyrapone, prochloraz, ancymidol and cytochrome C. In terms of biological role, involved in the biosynthesis of the isoquinoline alkaloid sanguinarine. Catalyzes the conversion of N-methylated protoberberine alkaloids N-methylstylopine and N-methylcanadine into protopine and allocryptopine, respectively. Can also use (S)-cis-N-methyltetrahydrothalifendine and (S)-cis-N-methyltetrahydropalmatine as substrates. The sequence is that of Methyltetrahydroprotoberberine 14-monooxygenase from Papaver somniferum (Opium poppy).